A 147-amino-acid polypeptide reads, in one-letter code: Large ribosomal subunit protein uL13 (147 aa).

Belongs to the universal ribosomal protein uL13 family. Part of the 50S ribosomal subunit.

Functionally, this protein is one of the early assembly proteins of the 50S ribosomal subunit, although it is not seen to bind rRNA by itself. It is important during the early stages of 50S assembly. This is Large ribosomal subunit protein uL13 from Nocardia farcinica (strain IFM 10152).